We begin with the raw amino-acid sequence, 137 residues long: Ribosome-binding factor A (137 aa).

The protein belongs to the RbfA family. As to quaternary structure, monomer. Binds 30S ribosomal subunits, but not 50S ribosomal subunits or 70S ribosomes.

Its subcellular location is the cytoplasm. In terms of biological role, one of several proteins that assist in the late maturation steps of the functional core of the 30S ribosomal subunit. Associates with free 30S ribosomal subunits (but not with 30S subunits that are part of 70S ribosomes or polysomes). Required for efficient processing of 16S rRNA. May interact with the 5'-terminal helix region of 16S rRNA. This Cereibacter sphaeroides (strain KD131 / KCTC 12085) (Rhodobacter sphaeroides) protein is Ribosome-binding factor A.